The primary structure comprises 149 residues: Flagellar assembly factor FliW (149 aa).

This sequence belongs to the FliW family. In terms of assembly, interacts with translational regulator CsrA and flagellin(s).

It localises to the cytoplasm. Its function is as follows. Acts as an anti-CsrA protein, binds CsrA and prevents it from repressing translation of its target genes, one of which is flagellin. Binds to flagellin and participates in the assembly of the flagellum. The polypeptide is Flagellar assembly factor FliW (Thermotoga maritima (strain ATCC 43589 / DSM 3109 / JCM 10099 / NBRC 100826 / MSB8)).